The primary structure comprises 205 residues: Methylthioribulose-1-phosphate dehydratase (205 aa).

His96 and His98 together coordinate Zn(2+).

This sequence belongs to the aldolase class II family. MtnB subfamily. The cofactor is Zn(2+).

It catalyses the reaction 5-(methylsulfanyl)-D-ribulose 1-phosphate = 5-methylsulfanyl-2,3-dioxopentyl phosphate + H2O. Its pathway is amino-acid biosynthesis; L-methionine biosynthesis via salvage pathway; L-methionine from S-methyl-5-thio-alpha-D-ribose 1-phosphate: step 2/6. In terms of biological role, catalyzes the dehydration of methylthioribulose-1-phosphate (MTRu-1-P) into 2,3-diketo-5-methylthiopentyl-1-phosphate (DK-MTP-1-P). The protein is Methylthioribulose-1-phosphate dehydratase of Exiguobacterium sp. (strain ATCC BAA-1283 / AT1b).